The chain runs to 472 residues: UDP-N-acetylmuramate--L-alanine ligase (472 aa).

122-128 (GTHGKTT) contacts ATP.

The protein belongs to the MurCDEF family.

The protein resides in the cytoplasm. It catalyses the reaction UDP-N-acetyl-alpha-D-muramate + L-alanine + ATP = UDP-N-acetyl-alpha-D-muramoyl-L-alanine + ADP + phosphate + H(+). It functions in the pathway cell wall biogenesis; peptidoglycan biosynthesis. In terms of biological role, cell wall formation. In Thermobifida fusca (strain YX), this protein is UDP-N-acetylmuramate--L-alanine ligase.